A 490-amino-acid polypeptide reads, in one-letter code: Mitochondria-eating protein (490 aa).

Residues 112 to 210 are a coiled coil; it reads IRELSSVHES…RILRDEVSFL (99 aa). 2 stretches are compositionally biased toward low complexity: residues 224-241 and 456-490; these read SRSP…SPVR and RSSS…SSRL. 2 disordered regions span residues 224–253 and 455–490; these read SRSP…LTSS and SRSS…SSRL.

It belongs to the MIEAP family.

It is found in the cytoplasm. It localises to the mitochondrion outer membrane. The protein resides in the mitochondrion matrix. Functionally, key regulator of mitochondrial quality that mediates the repairing or degradation of unhealthy mitochondria in response to mitochondrial damage. Mediator of mitochondrial protein catabolic process (also named MALM) by mediating the degradation of damaged proteins inside mitochondria by promoting the accumulation in the mitochondrial matrix of hydrolases that are characteristic of the lysosomal lumen. Also involved in mitochondrion degradation of damaged mitochondria by promoting the formation of vacuole-like structures (named MIV), which engulf and degrade unhealthy mitochondria by accumulating lysosomes. Binds cardiolipin. May form molecular condensates (non-membrane-bounded organelles) within mitochondria that compartmentalize and promote cardiolipin metabolism. This is Mitochondria-eating protein (spata18) from Danio rerio (Zebrafish).